The chain runs to 166 residues: MFDWIHGNSRLPIALSIVELLVDMDCKGCEKKVRRAISKLDGVDTVEIDVDRQKVTVTGYVDREEVLKMVKRTGRTAEYWPFPYNGYYGDYYTYPSQHLEQSDQKIYQTISYSGKYDFYDVDDFQNTNNSTINGYYPSSSQKVQPNIDENALHLFSDDNAHACTIM.

One can recognise an HMA domain in the interval 15 to 78 (LSIVELLVDM…MVKRTGRTAE (64 aa)). A metal cation-binding residues include Cys-26 and Cys-29. The residue at position 163 (Cys-163) is a Cysteine methyl ester. Residue Cys-163 is the site of S-farnesyl cysteine attachment. Positions 164–166 (TIM) are cleaved as a propeptide — removed in mature form.

The protein belongs to the HIPP family.

Its function is as follows. Heavy-metal-binding protein. This is Heavy metal-associated isoprenylated plant protein 45 from Arabidopsis thaliana (Mouse-ear cress).